Reading from the N-terminus, the 656-residue chain is Nexilin (656 aa).

3 disordered regions span residues M1 to D131, R165 to C198, and T215 to E284. The segment covering L11–L26 has biased composition (low complexity). Over residues G27 to L78 the composition is skewed to basic and acidic residues. Phosphoserine is present on S80. 3 stretches are compositionally biased toward basic and acidic residues: residues G103–D131, N169–C198, and E216–V269. Phosphoserine is present on residues S221, S330, S337, and S345. The residue at position 350 (T350) is a Phosphothreonine. Disordered stretches follow at residues N468 to N492 and A529 to F564. S544 and S549 each carry phosphoserine. T551 bears the Phosphothreonine mark. The region spanning P562–T650 is the Ig-like domain.

As to quaternary structure, interacts with F-actin. Expressed in brain, testis, spleen and fibroblasts (at protein level). Not detected in liver, kidney or epithelial cells (at protein level).

The protein localises to the cytoplasm. Its subcellular location is the cytoskeleton. It is found in the cell junction. It localises to the adherens junction. The protein resides in the myofibril. The protein localises to the sarcomere. Its subcellular location is the z line. Its function is as follows. Involved in regulating cell migration through association with the actin cytoskeleton. Has an essential role in the maintenance of Z line and sarcomere integrity. The sequence is that of Nexilin from Rattus norvegicus (Rat).